The following is a 192-amino-acid chain: Ion-translocating oxidoreductase complex subunit B (192 aa).

The segment at 1–26 (MTAIWIAIAALSALALAFGLVLGYAS) is hydrophobic. The region spanning 32–91 (ENDPIVEEVEAMLPQSQCGQCGYPGCRPYAEAVSLNGESINKCGPGGEAMMLKLAEKLNV) is the 4Fe-4S domain. Residues C49, C52, C57, C74, C117, C120, C123, C127, C147, C150, C153, and C157 each contribute to the [4Fe-4S] cluster site. 2 consecutive 4Fe-4S ferredoxin-type domains span residues 108 to 137 (HVAWIDESNCIGCTKCIQACPVDAIIGSTK) and 138 to 167 (AVHTVVSDLCTGCDLCISPCPTDCIELRPI).

The protein belongs to the 4Fe4S bacterial-type ferredoxin family. RnfB subfamily. The complex is composed of six subunits: RnfA, RnfB, RnfC, RnfD, RnfE and RnfG. It depends on [4Fe-4S] cluster as a cofactor.

Its subcellular location is the cell inner membrane. In terms of biological role, part of a membrane-bound complex that couples electron transfer with translocation of ions across the membrane. This chain is Ion-translocating oxidoreductase complex subunit B, found in Pectobacterium atrosepticum (strain SCRI 1043 / ATCC BAA-672) (Erwinia carotovora subsp. atroseptica).